A 258-amino-acid chain; its full sequence is Imidazole glycerol phosphate synthase subunit HisF (258 aa).

Catalysis depends on residues D11 and D130.

It belongs to the HisA/HisF family. In terms of assembly, heterodimer of HisH and HisF.

Its subcellular location is the cytoplasm. It catalyses the reaction 5-[(5-phospho-1-deoxy-D-ribulos-1-ylimino)methylamino]-1-(5-phospho-beta-D-ribosyl)imidazole-4-carboxamide + L-glutamine = D-erythro-1-(imidazol-4-yl)glycerol 3-phosphate + 5-amino-1-(5-phospho-beta-D-ribosyl)imidazole-4-carboxamide + L-glutamate + H(+). It functions in the pathway amino-acid biosynthesis; L-histidine biosynthesis; L-histidine from 5-phospho-alpha-D-ribose 1-diphosphate: step 5/9. Functionally, IGPS catalyzes the conversion of PRFAR and glutamine to IGP, AICAR and glutamate. The HisF subunit catalyzes the cyclization activity that produces IGP and AICAR from PRFAR using the ammonia provided by the HisH subunit. The sequence is that of Imidazole glycerol phosphate synthase subunit HisF from Serratia proteamaculans (strain 568).